Here is a 256-residue protein sequence, read N- to C-terminus: Deoxyribose-phosphate aldolase (256 aa).

Asp102 acts as the Proton donor/acceptor in catalysis. Lys165 acts as the Schiff-base intermediate with acetaldehyde in catalysis. Catalysis depends on Lys197, which acts as the Proton donor/acceptor.

Belongs to the DeoC/FbaB aldolase family. DeoC type 2 subfamily.

Its subcellular location is the cytoplasm. It catalyses the reaction 2-deoxy-D-ribose 5-phosphate = D-glyceraldehyde 3-phosphate + acetaldehyde. Its pathway is carbohydrate degradation; 2-deoxy-D-ribose 1-phosphate degradation; D-glyceraldehyde 3-phosphate and acetaldehyde from 2-deoxy-alpha-D-ribose 1-phosphate: step 2/2. Catalyzes a reversible aldol reaction between acetaldehyde and D-glyceraldehyde 3-phosphate to generate 2-deoxy-D-ribose 5-phosphate. This chain is Deoxyribose-phosphate aldolase, found in Shewanella sp. (strain MR-7).